Reading from the N-terminus, the 545-residue chain is GMP synthase [glutamine-hydrolyzing] (545 aa).

Positions 17 to 211 constitute a Glutamine amidotransferase type-1 domain; sequence TVLVLDMGSQ…ATKICGARPD (195 aa). Residue Cys93 is the Nucleophile of the active site. Residues His185 and Glu187 contribute to the active site. Residues 212-420 form the GMPS ATP-PPase domain; the sequence is WKMDDFSARE…LGIHEELIGR (209 aa). 240 to 246 is an ATP binding site; sequence SGGVDST. XMP contacts are provided by Arg313, Asp482, Lys537, and Glu543.

Homodimer. The cofactor is Mg(2+).

Its subcellular location is the cytoplasm. The protein resides in the cytosol. The catalysed reaction is XMP + L-glutamine + ATP + H2O = GMP + L-glutamate + AMP + diphosphate + 2 H(+). Its pathway is purine metabolism; GMP biosynthesis; GMP from XMP (L-Gln route): step 1/1. Catalyzes the conversion of xanthine monophosphate (XMP) to GMP in the presence of glutamine and ATP through an adenyl-XMP intermediate. This chain is GMP synthase [glutamine-hydrolyzing] (GUA1), found in Gibberella zeae (strain ATCC MYA-4620 / CBS 123657 / FGSC 9075 / NRRL 31084 / PH-1) (Wheat head blight fungus).